A 504-amino-acid polypeptide reads, in one-letter code: Ectoine/proline transporter ProP (504 aa).

11 helical membrane passes run 41–61 (FMEW…TAVF), 71–91 (LLAV…GGLV), 118–138 (LIGL…LLYL), 169–189 (FFGA…ASVV), 207–227 (DFGW…AVYL), 272–292 (LLIG…LTSY), 309–329 (AAVT…VGMW), 337–357 (PVYA…FLIM), 362–382 (IGAV…YVAL), 399–419 (GMGI…PLIT), and 430–450 (IVPA…LLFM). The tract at residues 477-504 (NQDEDPNIDLSHMPFPDEENVGAEKQNA) is disordered.

It belongs to the major facilitator superfamily.

Its subcellular location is the cell membrane. Uptake is activated by osmotic stress. Inhibited by CCCP. Functionally, involved in the uptake of osmoprotectants. Can transport ectoine and proline. Protons are probably the coupling ions. The chain is Ectoine/proline transporter ProP from Corynebacterium glutamicum (strain ATCC 13032 / DSM 20300 / JCM 1318 / BCRC 11384 / CCUG 27702 / LMG 3730 / NBRC 12168 / NCIMB 10025 / NRRL B-2784 / 534).